Consider the following 196-residue polypeptide: uncharacterized protein (196 aa).

Positions 122–135 (SEIEKKQEPIERKT) are enriched in basic and acidic residues. Positions 122 to 150 (SEIEKKQEPIERKTSTTTNTESNQEKPLR) are disordered.

This is an uncharacterized protein from Leptospira interrogans.